Reading from the N-terminus, the 206-residue chain is Thiamine-phosphate synthase (206 aa).

4-amino-2-methyl-5-(diphosphooxymethyl)pyrimidine is bound by residues 33-37 and asparagine 65; that span reads QMRFK. Mg(2+)-binding residues include aspartate 66 and aspartate 85. Threonine 104 contributes to the 4-amino-2-methyl-5-(diphosphooxymethyl)pyrimidine binding site. A 2-[(2R,5Z)-2-carboxy-4-methylthiazol-5(2H)-ylidene]ethyl phosphate-binding site is contributed by 130–132; the sequence is TAT. Lysine 133 serves as a coordination point for 4-amino-2-methyl-5-(diphosphooxymethyl)pyrimidine. Glycine 166 lines the 2-[(2R,5Z)-2-carboxy-4-methylthiazol-5(2H)-ylidene]ethyl phosphate pocket.

This sequence belongs to the thiamine-phosphate synthase family. Mg(2+) is required as a cofactor.

It carries out the reaction 2-[(2R,5Z)-2-carboxy-4-methylthiazol-5(2H)-ylidene]ethyl phosphate + 4-amino-2-methyl-5-(diphosphooxymethyl)pyrimidine + 2 H(+) = thiamine phosphate + CO2 + diphosphate. The enzyme catalyses 2-(2-carboxy-4-methylthiazol-5-yl)ethyl phosphate + 4-amino-2-methyl-5-(diphosphooxymethyl)pyrimidine + 2 H(+) = thiamine phosphate + CO2 + diphosphate. It catalyses the reaction 4-methyl-5-(2-phosphooxyethyl)-thiazole + 4-amino-2-methyl-5-(diphosphooxymethyl)pyrimidine + H(+) = thiamine phosphate + diphosphate. The protein operates within cofactor biosynthesis; thiamine diphosphate biosynthesis; thiamine phosphate from 4-amino-2-methyl-5-diphosphomethylpyrimidine and 4-methyl-5-(2-phosphoethyl)-thiazole: step 1/1. Functionally, condenses 4-methyl-5-(beta-hydroxyethyl)thiazole monophosphate (THZ-P) and 2-methyl-4-amino-5-hydroxymethyl pyrimidine pyrophosphate (HMP-PP) to form thiamine monophosphate (TMP). In Flavobacterium psychrophilum (strain ATCC 49511 / DSM 21280 / CIP 103535 / JIP02/86), this protein is Thiamine-phosphate synthase.